The primary structure comprises 461 residues: Argininosuccinate lyase (461 aa).

Belongs to the lyase 1 family. Argininosuccinate lyase subfamily.

Its subcellular location is the cytoplasm. The catalysed reaction is 2-(N(omega)-L-arginino)succinate = fumarate + L-arginine. The protein operates within amino-acid biosynthesis; L-arginine biosynthesis; L-arginine from L-ornithine and carbamoyl phosphate: step 3/3. This chain is Argininosuccinate lyase, found in Bacillus subtilis (strain 168).